The sequence spans 583 residues: Extracellular serine/threonine protein kinase four-jointed (583 aa).

At 1–78 (MYDIKRLEAG…RRRSLQRRAC (78 aa)) the chain is on the cytoplasmic side. Residues 79-99 (LLSILAAFVFGMALGVVVPMF) traverse the membrane as a helical; Signal-anchor for type II membrane protein segment. Residues 100–583 (GLPRHQDSPP…LGQVQKCQGS (484 aa)) lie on the Extracellular side of the membrane. Residues 179–222 (RTASGRYRKGPERRLSKKMPERVQPQETSRSPTTSPTNPTSEHQ) are disordered. The span at 187–199 (KGPERRLSKKMPE) shows a compositional bias: basic and acidic residues. Positions 206 to 219 (TSRSPTTSPTNPTS) are enriched in low complexity. N-linked (GlcNAc...) asparagine glycans are attached at residues Asn310 and Asn379. A disordered region spans residues 384–421 (MQSERQAQSQPHGLLKRLGAASSPGSAHQSNAIEETGT). Residue Asn491 is glycosylated (N-linked (GlcNAc...) asparagine).

It belongs to the FJX1/FJ family. In terms of processing, proteolytically cleaved to yield a secreted protein. As to expression, in the eye disk, expressed in a gradient ahead of the morphogenetic furrow, high at the equator and low at the poles of the eye. In the leg disk, expressed in concentric rings, possibly corresponding to segmental boundaries. In the wing disk, expression is localized in the wing pouch; low in peripheral regions and high towards the center.

It localises to the golgi apparatus membrane. The protein resides in the secreted. It carries out the reaction L-seryl-[protein] + ATP = O-phospho-L-seryl-[protein] + ADP + H(+). The enzyme catalyses L-threonyl-[protein] + ATP = O-phospho-L-threonyl-[protein] + ADP + H(+). Functionally, golgi serine/threonine protein kinase required for intermediate growth in the proximal-distal axis. Phosphorylates specific residues within extracellular cadherin domains of Fat (ft) and Dachsous (ds) as they transit through the Golgi. Acts in ommatidial polarity determination as a secondary signal downstream of Notch, JAK/STAT and wingless. Also necessary for the initiation, up-regulation or maintenance of Notch ligand, Serrate (Ser) expression in legs, thereby participating in a feedback loop with N signaling. Sufficient for joint formation and growth in the leg. The chain is Extracellular serine/threonine protein kinase four-jointed from Drosophila melanogaster (Fruit fly).